The sequence spans 535 residues: CTP synthase (535 aa).

Positions 1-268 (MKTKYIFVTG…DSLVCKKLEL (268 aa)) are amidoligase domain. Position 14 (S14) interacts with CTP. Residue S14 participates in UTP binding. 15–20 (SLGKGI) provides a ligand contact to ATP. Y55 lines the L-glutamine pocket. D72 contacts ATP. 2 residues coordinate Mg(2+): D72 and E142. Residues 149-151 (DIE), 189-194 (KTKPTQ), and K225 contribute to the CTP site. UTP is bound by residues 189–194 (KTKPTQ) and K225. Residues 293-535 (TIGLVGKYVE…IKVACTVKEK (243 aa)) form the Glutamine amidotransferase type-1 domain. G355 lines the L-glutamine pocket. C382 acts as the Nucleophile; for glutamine hydrolysis in catalysis. Residues 383–386 (LGMQ), E406, and R463 each bind L-glutamine. Catalysis depends on residues H508 and E510.

Belongs to the CTP synthase family. Homotetramer.

The enzyme catalyses UTP + L-glutamine + ATP + H2O = CTP + L-glutamate + ADP + phosphate + 2 H(+). It catalyses the reaction L-glutamine + H2O = L-glutamate + NH4(+). The catalysed reaction is UTP + NH4(+) + ATP = CTP + ADP + phosphate + 2 H(+). It participates in pyrimidine metabolism; CTP biosynthesis via de novo pathway; CTP from UDP: step 2/2. Its activity is regulated as follows. Allosterically activated by GTP, when glutamine is the substrate; GTP has no effect on the reaction when ammonia is the substrate. The allosteric effector GTP functions by stabilizing the protein conformation that binds the tetrahedral intermediate(s) formed during glutamine hydrolysis. Inhibited by the product CTP, via allosteric rather than competitive inhibition. Its function is as follows. Catalyzes the ATP-dependent amination of UTP to CTP with either L-glutamine or ammonia as the source of nitrogen. Regulates intracellular CTP levels through interactions with the four ribonucleotide triphosphates. The protein is CTP synthase of Clostridium acetobutylicum (strain ATCC 824 / DSM 792 / JCM 1419 / IAM 19013 / LMG 5710 / NBRC 13948 / NRRL B-527 / VKM B-1787 / 2291 / W).